The following is a 108-amino-acid chain: Competence protein ComGC (108 aa).

A signal peptide spans 1–13 (MKKMMTFLKKAKV). Residues 14–39 (KAFTLVEMLVVLLIISVLFLLFVPNL) form a may be involved in polymerization of ComGC region. Phe-16 carries the post-translational modification N-methylphenylalanine. Residues 16-36 (FTLVEMLVVLLIISVLFLLFV) traverse the membrane as a helical segment.

It belongs to the ComGC family. The transformation pili are flexible filaments, consisting mainly of the major pilin ComGC and smaller amounts of the minor pilins, including at least ComGD, ComGF and ComGG, and perhaps ComGE. Homodimer. Forms higher-order multimers. Interacts with ComGG; the interaction is probably direct. In terms of processing, undergoes proteolytic cleavage.

It localises to the cell membrane. The protein localises to the cell surface. It is found in the fimbrium. The protein resides in the secreted. Major component of the type IV-like pilus (T4P) that plays a role in transformation. Transformation pili are dynamically extended and retracted, perhaps thereby promoting DNA uptake and transformation. Required for transformation. Required for DNA binding. This is Competence protein ComGC from Streptococcus pneumoniae serotype 4 (strain ATCC BAA-334 / TIGR4).